Consider the following 124-residue polypeptide: Large ribosomal subunit protein bL20 (124 aa).

It belongs to the bacterial ribosomal protein bL20 family.

Functionally, binds directly to 23S ribosomal RNA and is necessary for the in vitro assembly process of the 50S ribosomal subunit. It is not involved in the protein synthesizing functions of that subunit. The polypeptide is Large ribosomal subunit protein bL20 (Ehrlichia canis (strain Jake)).